Consider the following 348-residue polypeptide: Phosphate acyltransferase (348 aa).

This sequence belongs to the PlsX family. In terms of assembly, homodimer. Probably interacts with PlsY.

It is found in the cytoplasm. It catalyses the reaction a fatty acyl-[ACP] + phosphate = an acyl phosphate + holo-[ACP]. Its pathway is lipid metabolism; phospholipid metabolism. In terms of biological role, catalyzes the reversible formation of acyl-phosphate (acyl-PO(4)) from acyl-[acyl-carrier-protein] (acyl-ACP). This enzyme utilizes acyl-ACP as fatty acyl donor, but not acyl-CoA. This chain is Phosphate acyltransferase, found in Synechocystis sp. (strain ATCC 27184 / PCC 6803 / Kazusa).